The chain runs to 55 residues: Large ribosomal subunit protein bL33 (55 aa).

This sequence belongs to the bacterial ribosomal protein bL33 family.

The polypeptide is Large ribosomal subunit protein bL33 (Campylobacter fetus subsp. fetus (strain 82-40)).